The primary structure comprises 264 residues: Thymidylate synthase (264 aa).

Residue arginine 21 participates in dUMP binding. (6R)-5,10-methylene-5,6,7,8-tetrahydrofolate is bound at residue histidine 51. 126–127 (RR) lines the dUMP pocket. Cysteine 146 acts as the Nucleophile in catalysis. DUMP is bound by residues 166 to 169 (RSCD), asparagine 177, and 207 to 209 (HLY). Aspartate 169 serves as a coordination point for (6R)-5,10-methylene-5,6,7,8-tetrahydrofolate. Residue serine 263 participates in (6R)-5,10-methylene-5,6,7,8-tetrahydrofolate binding.

The protein belongs to the thymidylate synthase family. Bacterial-type ThyA subfamily. Homodimer.

It is found in the cytoplasm. The catalysed reaction is dUMP + (6R)-5,10-methylene-5,6,7,8-tetrahydrofolate = 7,8-dihydrofolate + dTMP. Its pathway is pyrimidine metabolism; dTTP biosynthesis. Catalyzes the reductive methylation of 2'-deoxyuridine-5'-monophosphate (dUMP) to 2'-deoxythymidine-5'-monophosphate (dTMP) while utilizing 5,10-methylenetetrahydrofolate (mTHF) as the methyl donor and reductant in the reaction, yielding dihydrofolate (DHF) as a by-product. This enzymatic reaction provides an intracellular de novo source of dTMP, an essential precursor for DNA biosynthesis. In Buchnera aphidicola subsp. Schizaphis graminum (strain Sg), this protein is Thymidylate synthase.